The following is a 94-amino-acid chain: Small ribosomal subunit protein uS19 (94 aa).

The protein belongs to the universal ribosomal protein uS19 family.

Protein S19 forms a complex with S13 that binds strongly to the 16S ribosomal RNA. This Dictyoglomus thermophilum (strain ATCC 35947 / DSM 3960 / H-6-12) protein is Small ribosomal subunit protein uS19.